Reading from the N-terminus, the 288-residue chain is Protoheme IX farnesyltransferase (288 aa).

9 helical membrane-spanning segments follow: residues 8–28, 35–55, 80–100, 107–127, 132–152, 162–182, 208–228, 229–249, and 266–286; these read ATKP…FLLA, YLIF…GCVL, ISIL…IYLL, LTML…TKCM, IYST…GYCA, LLLL…IAIL, IVIY…SGYT, TSYQ…YLAL, and FIFS…DSIF.

Belongs to the UbiA prenyltransferase family. Protoheme IX farnesyltransferase subfamily.

The protein resides in the cell membrane. It carries out the reaction heme b + (2E,6E)-farnesyl diphosphate + H2O = Fe(II)-heme o + diphosphate. It functions in the pathway porphyrin-containing compound metabolism; heme O biosynthesis; heme O from protoheme: step 1/1. Functionally, converts heme B (protoheme IX) to heme O by substitution of the vinyl group on carbon 2 of heme B porphyrin ring with a hydroxyethyl farnesyl side group. This is Protoheme IX farnesyltransferase from Baumannia cicadellinicola subsp. Homalodisca coagulata.